We begin with the raw amino-acid sequence, 896 residues long: Bifunctional glutamine synthetase adenylyltransferase/adenylyl-removing enzyme (896 aa).

Positions 1–411 are adenylyl removase; it reads MSDNRLDTAR…LFNEILSEPE (411 aa). An adenylyl transferase region spans residues 417–896; it reads NSEWQWAWQD…EVFGEEAATV (480 aa).

The protein belongs to the GlnE family. The cofactor is Mg(2+).

The enzyme catalyses [glutamine synthetase]-O(4)-(5'-adenylyl)-L-tyrosine + phosphate = [glutamine synthetase]-L-tyrosine + ADP. It carries out the reaction [glutamine synthetase]-L-tyrosine + ATP = [glutamine synthetase]-O(4)-(5'-adenylyl)-L-tyrosine + diphosphate. In terms of biological role, involved in the regulation of glutamine synthetase GlnA, a key enzyme in the process to assimilate ammonia. When cellular nitrogen levels are high, the C-terminal adenylyl transferase (AT) inactivates GlnA by covalent transfer of an adenylyl group from ATP to specific tyrosine residue of GlnA, thus reducing its activity. Conversely, when nitrogen levels are low, the N-terminal adenylyl removase (AR) activates GlnA by removing the adenylyl group by phosphorolysis, increasing its activity. The regulatory region of GlnE binds the signal transduction protein PII (GlnB) which indicates the nitrogen status of the cell. This Neisseria meningitidis serogroup B (strain ATCC BAA-335 / MC58) protein is Bifunctional glutamine synthetase adenylyltransferase/adenylyl-removing enzyme.